Here is a 154-residue protein sequence, read N- to C-terminus: Endoribonuclease YbeY (154 aa).

The Zn(2+) site is built by histidine 113, histidine 117, and histidine 123.

The protein belongs to the endoribonuclease YbeY family. Zn(2+) is required as a cofactor.

Its subcellular location is the cytoplasm. Its function is as follows. Single strand-specific metallo-endoribonuclease involved in late-stage 70S ribosome quality control and in maturation of the 3' terminus of the 16S rRNA. The chain is Endoribonuclease YbeY from Vibrio vulnificus (strain CMCP6).